A 403-amino-acid polypeptide reads, in one-letter code: Acetyl-CoA acetyltransferase IB (403 aa).

Cysteine 91 functions as the Acyl-thioester intermediate in the catalytic mechanism. Residues histidine 353 and cysteine 383 each act as proton acceptor in the active site. The Microbody targeting signal signature appears at 401–403; sequence AKL.

Belongs to the thiolase-like superfamily. Thiolase family. In terms of assembly, multimeric.

It localises to the peroxisome. It carries out the reaction 2 acetyl-CoA = acetoacetyl-CoA + CoA. It functions in the pathway metabolic intermediate biosynthesis; (R)-mevalonate biosynthesis; (R)-mevalonate from acetyl-CoA: step 1/3. The protein is Acetyl-CoA acetyltransferase IB (PACTB) of Candida tropicalis (Yeast).